The sequence spans 219 residues: Histidinol-phosphate aminotransferase (219 aa).

The protein belongs to the class-II pyridoxal-phosphate-dependent aminotransferase family. Histidinol-phosphate aminotransferase subfamily. In terms of assembly, homodimer. Pyridoxal 5'-phosphate is required as a cofactor.

It carries out the reaction L-histidinol phosphate + 2-oxoglutarate = 3-(imidazol-4-yl)-2-oxopropyl phosphate + L-glutamate. It functions in the pathway amino-acid biosynthesis; L-histidine biosynthesis; L-histidine from 5-phospho-alpha-D-ribose 1-diphosphate: step 7/9. This chain is Histidinol-phosphate aminotransferase (hisC), found in Mycolicibacterium smegmatis (Mycobacterium smegmatis).